Reading from the N-terminus, the 221-residue chain is NEP1-interacting protein-like 1 (221 aa).

Helical transmembrane passes span 35–55, 69–89, and 95–115; these read LFTFFFALVGTLLGALTGALI, VGAISGAVFSIEVFESSLLLW, and GIGCLLYLIDVIASLLSGRLV. The RING-type; atypical zinc-finger motif lies at 176–218; sequence CSVCLQDFQVGETVRSLPHCHHMFHLPCIDKWLRRHASCPLCR.

It belongs to the RING-type zinc finger family. NIP subfamily.

It is found in the membrane. Functionally, may be involved in the early steps of the plant defense signaling pathway. In Arabidopsis thaliana (Mouse-ear cress), this protein is NEP1-interacting protein-like 1 (ATL27).